A 531-amino-acid chain; its full sequence is UDP-glucuronosyltransferase 1A7 (531 aa).

The N-terminal stretch at 1–25 (MAPADFPASLPLCVCLLLASGLAQA) is a signal peptide. Residues Asn293 and Asn431 are each glycosylated (N-linked (GlcNAc...) asparagine). Residues 489–509 (VIGFLLAIVLTVVFIVFKCCA) traverse the membrane as a helical segment.

Belongs to the UDP-glycosyltransferase family. In terms of assembly, homodimer. Homooligomer. Interacts with UGT1A1, UGT1A3, UGT1A4, UGT1A6, UGT1A8, UGT1A9 and UGT1A10 to form heterodimers. Widely expressed with highest levels detected in colon and kidney.

The protein localises to the endoplasmic reticulum membrane. It carries out the reaction glucuronate acceptor + UDP-alpha-D-glucuronate = acceptor beta-D-glucuronoside + UDP + H(+). The enzyme catalyses 17alpha-estradiol + UDP-alpha-D-glucuronate = 17alpha-estradiol 3-O-(beta-D-glucuronate) + UDP + H(+). It catalyses the reaction prunetin + UDP-alpha-D-glucuronate = prunetin-5-O-beta-D-glucuronide + UDP. The catalysed reaction is 5-epi-5-F2t-IsoP + UDP-alpha-D-glucuronate = 5-epi-5-F2t-IsoP-glucuronide + UDP + H(+). It carries out the reaction (E)-ferulate + UDP-alpha-D-glucuronate = (E)-ferulic acid beta-D-glucuronate ester + UDP. The enzyme catalyses candesartan + UDP-alpha-D-glucuronate = candesartan O-beta-D-glucuronoside + UDP. It catalyses the reaction SN-38 + UDP-alpha-D-glucuronate = SN-38 O-beta-D-glucuronide + UDP + H(+). The catalysed reaction is mycophenolate + UDP-alpha-D-glucuronate = mycophenolate 7-O-beta-D-glucuronide + UDP + H(+). Functionally, UDP-glucuronosyltransferase (UGT) that catalyzes phase II biotransformation reactions in which lipophilic substrates are conjugated with glucuronic acid to increase the metabolite's water solubility, thereby facilitating excretion into either the urine or bile. Essential for the elimination and detoxification of drugs, xenobiotics and endogenous compounds. Catalyzes the glucuronidation of endogenous estrogen hormone epiestradiol. Involved in the glucuronidation of F2-isoprostane (5-epi-5-F2t-IsoP). Involved in the glucuronidation of the phytochemical ferulic acid at the carboxylic acid group. Also catalyzes the glucuronidation of the isoflavones genistein, daidzein, glycitein, formononetin, biochanin A and prunetin, which are phytoestrogens with anticancer and cardiovascular properties. Involved in the glucuronidation of the AGTR1 angiotensin receptor antagonist caderastan, a drug which can inhibit the effect of angiotensin II. Involved in the biotransformation of 7-ethyl-10-hydroxycamptothecin (SN-38), the pharmacologically active metabolite of the anticancer drug irinotecan. Also metabolizes mycophenolate, an immunosuppressive agent. This Mus musculus (Mouse) protein is UDP-glucuronosyltransferase 1A7.